The following is a 668-amino-acid chain: Probable potassium transport system protein Kup (668 aa).

12 helical membrane-spanning segments follow: residues 17–37, 59–79, 104–124, 148–168, 175–195, 221–241, 256–276, 299–319, 350–370, 380–400, 403–423, and 430–450; these read GILV…LYVM, VSLI…VIAL, IIPA…TPAV, TIIV…QRFG, AFGP…LMNF, LGLF…ALYS, PYIK…LLTV, ILVF…QALI, MYIP…VLAF, YGLS…FYLL, IPAW…VVFF, and FFHG…IMII.

This sequence belongs to the HAK/KUP transporter (TC 2.A.72) family.

The protein localises to the cell membrane. It carries out the reaction K(+)(in) + H(+)(in) = K(+)(out) + H(+)(out). Its function is as follows. Transport of potassium into the cell. Likely operates as a K(+):H(+) symporter. The protein is Probable potassium transport system protein Kup of Enterococcus faecalis (strain ATCC 700802 / V583).